The sequence spans 782 residues: Protein phosphatase 1 regulatory subunit 12C (782 aa).

Low complexity-rich tracts occupy residues methionine 1–alanine 19 and aspartate 77–proline 88. 2 disordered regions span residues methionine 1–arginine 45 and aspartate 77–leucine 98. Serine 2 is subject to N-acetylserine. ANK repeat units follow at residues aspartate 104 to glutamine 133, glutamate 137 to alanine 166, threonine 230 to leucine 259, and aspartate 263 to serine 292. Residues cysteine 301–arginine 332 are a coiled coil. The segment at aspartate 321–lysine 685 is disordered. Over residues arginine 332–serine 341 the composition is skewed to polar residues. Residues serine 353–proline 369 are compositionally biased toward basic and acidic residues. Positions valine 401–valine 413 are enriched in low complexity. 5 positions are modified to phosphoserine: serine 403, serine 411, serine 431, serine 454, and serine 509. Positions arginine 451–alanine 465 are enriched in polar residues. Over residues valine 537–arginine 546 the composition is skewed to basic and acidic residues. Residues lysine 547–arginine 557 show a composition bias toward basic residues. Threonine 560 carries the post-translational modification Phosphothreonine. Residue serine 647 is modified to Phosphoserine. The span at serine 664–lysine 685 shows a compositional bias: basic and acidic residues. Residues glycine 681 to lysine 782 are a coiled coil.

In terms of assembly, PP1 comprises a catalytic subunit, PPP1CA, PPP1CB or PPP1CC, and one or several targeting or regulatory subunits. PPP1R12C mediates binding to myosin. Interacts via its N-terminus with PPP1CB. Interacts with IL16. Interacts with the coiled-coil domain of MPRIP. Interacts with NOD2. Post-translationally, phosphorylation at Thr-560 is essential for its interaction with PPP1CB.

Its subcellular location is the cytoplasm. The protein resides in the cytoskeleton. The protein localises to the stress fiber. Its function is as follows. Regulates myosin phosphatase activity. The sequence is that of Protein phosphatase 1 regulatory subunit 12C from Mus musculus (Mouse).